A 358-amino-acid chain; its full sequence is Alanine racemase (358 aa).

The active-site Proton acceptor; specific for D-alanine is the K35. K35 is subject to N6-(pyridoxal phosphate)lysine. R130 is a substrate binding site. Y255 acts as the Proton acceptor; specific for L-alanine in catalysis. M303 provides a ligand contact to substrate.

Belongs to the alanine racemase family. Requires pyridoxal 5'-phosphate as cofactor.

It catalyses the reaction L-alanine = D-alanine. The protein operates within amino-acid biosynthesis; D-alanine biosynthesis; D-alanine from L-alanine: step 1/1. Its function is as follows. Catalyzes the interconversion of L-alanine and D-alanine. May also act on other amino acids. This is Alanine racemase (alr) from Shewanella piezotolerans (strain WP3 / JCM 13877).